A 208-amino-acid polypeptide reads, in one-letter code: ATP-dependent Clp protease proteolytic subunit (208 aa).

S105 acts as the Nucleophile in catalysis. H130 is an active-site residue.

Belongs to the peptidase S14 family. In terms of assembly, fourteen ClpP subunits assemble into 2 heptameric rings which stack back to back to give a disk-like structure with a central cavity, resembling the structure of eukaryotic proteasomes.

It localises to the cytoplasm. It carries out the reaction Hydrolysis of proteins to small peptides in the presence of ATP and magnesium. alpha-casein is the usual test substrate. In the absence of ATP, only oligopeptides shorter than five residues are hydrolyzed (such as succinyl-Leu-Tyr-|-NHMec, and Leu-Tyr-Leu-|-Tyr-Trp, in which cleavage of the -Tyr-|-Leu- and -Tyr-|-Trp bonds also occurs).. Functionally, cleaves peptides in various proteins in a process that requires ATP hydrolysis. Has a chymotrypsin-like activity. Plays a major role in the degradation of misfolded proteins. This is ATP-dependent Clp protease proteolytic subunit from Xanthomonas axonopodis pv. citri (strain 306).